Reading from the N-terminus, the 245-residue chain is tRNA pseudouridine synthase A (245 aa).

D52 (nucleophile) is an active-site residue. Residue Y111 participates in substrate binding.

This sequence belongs to the tRNA pseudouridine synthase TruA family. Homodimer.

It catalyses the reaction uridine(38/39/40) in tRNA = pseudouridine(38/39/40) in tRNA. Functionally, formation of pseudouridine at positions 38, 39 and 40 in the anticodon stem and loop of transfer RNAs. The protein is tRNA pseudouridine synthase A of Thermotoga petrophila (strain ATCC BAA-488 / DSM 13995 / JCM 10881 / RKU-1).